Reading from the N-terminus, the 278-residue chain is Sulfur carrier protein FdhD (278 aa).

Residue cysteine 121 is the Cysteine persulfide intermediate of the active site. Residue 260 to 265 (FCKPGR) coordinates Mo-bis(molybdopterin guanine dinucleotide).

The protein belongs to the FdhD family.

The protein resides in the cytoplasm. Functionally, required for formate dehydrogenase (FDH) activity. Acts as a sulfur carrier protein that transfers sulfur from IscS to the molybdenum cofactor prior to its insertion into FDH. The sequence is that of Sulfur carrier protein FdhD from Salmonella choleraesuis (strain SC-B67).